Here is a 199-residue protein sequence, read N- to C-terminus: Probable GTP-binding protein EngB (199 aa).

The 172-residue stretch at 28-199 folds into the EngB-type G domain; the sequence is DLPEIALAGR…DSWDAILEQV (172 aa). Residues 36-43, 63-67, 81-84, 148-151, and 180-182 contribute to the GTP site; these read GRSNVGKS, GKTQL, DVPG, TKAD, and FSS. Mg(2+) is bound by residues serine 43 and threonine 65.

The protein belongs to the TRAFAC class TrmE-Era-EngA-EngB-Septin-like GTPase superfamily. EngB GTPase family. Requires Mg(2+) as cofactor.

Its function is as follows. Necessary for normal cell division and for the maintenance of normal septation. This is Probable GTP-binding protein EngB from Streptococcus pyogenes serotype M1.